We begin with the raw amino-acid sequence, 123 residues long: MKKNFRVKREKDFKAIFKEGTSFANRKFVVYQLENQKNRFRVGLSVSKKLGNAVTRNQIKRRIRHIIQNAKGSLVEDVDFVVIARKGVETLGYAEMEKNLLHVLKLSKIYREGNGSEKETKVD.

Belongs to the RnpA family. Consists of a catalytic RNA component (M1 or rnpB) and a protein subunit.

It carries out the reaction Endonucleolytic cleavage of RNA, removing 5'-extranucleotides from tRNA precursor.. RNaseP catalyzes the removal of the 5'-leader sequence from pre-tRNA to produce the mature 5'-terminus. It can also cleave other RNA substrates such as 4.5S RNA. The protein component plays an auxiliary but essential role in vivo by binding to the 5'-leader sequence and broadening the substrate specificity of the ribozyme. In Streptococcus pneumoniae serotype 4 (strain ATCC BAA-334 / TIGR4), this protein is Ribonuclease P protein component.